The following is a 354-amino-acid chain: MAAECGSGNCDAWAARDPSGILSPYKFNRRAVQSDDVSLRITHCGVCYADVAWTRNILNNSMYPLVPGHEIAGVVTEVGADVKSFKVGDHVGVGTYVNSCRDCENCNSSLENYCSQHVFTFNGVDTDGTVTKGGYSTHIVVHERYCFKIPDGYPLEKAAPLLCAGITVYSPMMRHNMNQPGKSLGVIGLGGLGHMAVKFGKAFGLKVTVISTSESKRKEAIDLLGADNFVVSSDENQMETLKSSLNFIIDTASGDHPFDPYLTLLKVGGVMALLSFPSEIKVHPANLNLGGRSLSGSVTGGTKDIQEMINFCAANKIYPDIEMIKIDYINEALQRLVDRDVRFRFVIDIENSFK.

The Zn(2+) site is built by Cys-47, His-69, Glu-70, Cys-100, Cys-103, Cys-106, Cys-114, and Cys-163. NADP(+)-binding positions include Thr-167, 188–193, 211–216, Thr-251, and 297–299; these read GLGGLG, STSESK, and SVT.

The protein belongs to the zinc-containing alcohol dehydrogenase family. In terms of assembly, homodimer. The cofactor is Zn(2+).

It carries out the reaction (E)-cinnamyl alcohol + NADP(+) = (E)-cinnamaldehyde + NADPH + H(+). It catalyses the reaction (E)-coniferol + NADP(+) = (E)-coniferaldehyde + NADPH + H(+). The enzyme catalyses (E)-sinapyl alcohol + NADP(+) = (E)-sinapaldehyde + NADPH + H(+). The catalysed reaction is (E)-4-coumaroyl alcohol + NADP(+) = (E)-4-coumaraldehyde + NADPH + H(+). It carries out the reaction (E)-caffeyl alcohol + NADP(+) = (E)-caffeyl aldehyde + NADPH + H(+). Its pathway is aromatic compound metabolism; phenylpropanoid biosynthesis. Involved in lignin biosynthesis. Catalyzes the final step specific for the production of lignin monomers. Catalyzes the NADPH-dependent reduction of coniferaldehyde, 5-hydroxyconiferaldehyde, sinapaldehyde, 4-coumaraldehyde and caffeyl aldehyde to their respective alcohols. The polypeptide is Probable cinnamyl alcohol dehydrogenase 1 (Oryza sativa subsp. japonica (Rice)).